The primary structure comprises 61 residues: Antimicrobial peptide 1 (61 aa).

The first 24 residues, Leu1 to Ala24, serve as a signal peptide directing secretion. Gln25 carries the pyrrolidone carboxylic acid modification. Cystine bridges form between Cys26-Cys43, Cys33-Cys47, and Cys42-Cys58.

The protein belongs to the AMP family. As to quaternary structure, homodimer. Post-translationally, three disulfide bonds are present. In terms of tissue distribution, found only in seeds.

The protein resides in the secreted. Possesses antifungal activity and is also active on two tested Gram-positive bacteria but is non-toxic for Gram-negative bacteria and cultured human cells. The polypeptide is Antimicrobial peptide 1 (AMP1) (Mirabilis jalapa (Garden four-o'clock)).